The following is a 397-amino-acid chain: Aspartate/prephenate aminotransferase (397 aa).

The L-aspartate site is built by G38, W124, and N174. An N6-(pyridoxal phosphate)lysine modification is found at K238. Position 375 (R375) interacts with L-aspartate.

The protein belongs to the class-I pyridoxal-phosphate-dependent aminotransferase family. Homodimer. It depends on pyridoxal 5'-phosphate as a cofactor.

It is found in the cytoplasm. The enzyme catalyses L-aspartate + 2-oxoglutarate = oxaloacetate + L-glutamate. The catalysed reaction is L-arogenate + 2-oxoglutarate = prephenate + L-glutamate. Functionally, catalyzes the reversible conversion of aspartate and 2-oxoglutarate to glutamate and oxaloacetate. Can also transaminate prephenate in the presence of glutamate, with lower efficiency. The polypeptide is Aspartate/prephenate aminotransferase (Nitrosomonas europaea (strain ATCC 19718 / CIP 103999 / KCTC 2705 / NBRC 14298)).